The primary structure comprises 370 residues: Putrescine-binding periplasmic protein PotF (370 aa).

The first 26 residues, 1–26 (MTALNKKWLSGLVAGALMAVSVGTLA), serve as a signal peptide directing secretion. S38 serves as a coordination point for putrescine. A disulfide bridge links C175 with C239. Positions 247 and 278 each coordinate putrescine.

The protein belongs to the bacterial solute-binding protein PotD/PotF family. The complex is composed of two ATP-binding proteins (PotG), two transmembrane proteins (PotH and PotI) and a solute-binding protein (PotF).

The protein resides in the periplasm. Transport is feedback inhibited by intracellular polyamines. Functionally, part of the ABC transporter complex PotFGHI involved in putrescine uptake. Binds putrescine. Imports putrescine for maintenance of the optimal concentration of polyamines necessary for cell growth in the presence of glucose. The sequence is that of Putrescine-binding periplasmic protein PotF from Escherichia coli (strain K12).